The following is a 62-amino-acid chain: Large ribosomal subunit protein bL28 (62 aa).

The segment at 1-27 (MAKECVITGRKSRSGNKRSHAMNSSKR) is disordered. Positions 10–20 (RKSRSGNKRSH) are enriched in basic residues.

This sequence belongs to the bacterial ribosomal protein bL28 family.

The chain is Large ribosomal subunit protein bL28 from Listeria innocua serovar 6a (strain ATCC BAA-680 / CLIP 11262).